A 210-amino-acid polypeptide reads, in one-letter code: ATP phosphoribosyltransferase (210 aa).

This sequence belongs to the ATP phosphoribosyltransferase family. Short subfamily. As to quaternary structure, heteromultimer composed of HisG and HisZ subunits.

The protein resides in the cytoplasm. The catalysed reaction is 1-(5-phospho-beta-D-ribosyl)-ATP + diphosphate = 5-phospho-alpha-D-ribose 1-diphosphate + ATP. The protein operates within amino-acid biosynthesis; L-histidine biosynthesis; L-histidine from 5-phospho-alpha-D-ribose 1-diphosphate: step 1/9. Catalyzes the condensation of ATP and 5-phosphoribose 1-diphosphate to form N'-(5'-phosphoribosyl)-ATP (PR-ATP). Has a crucial role in the pathway because the rate of histidine biosynthesis seems to be controlled primarily by regulation of HisG enzymatic activity. This is ATP phosphoribosyltransferase from Picosynechococcus sp. (strain ATCC 27264 / PCC 7002 / PR-6) (Agmenellum quadruplicatum).